The chain runs to 949 residues: Syndetin (949 aa).

Residues 1 to 28 are disordered; it reads MQKIKSLMTRQGLRSPQESVHDLSPIEN. The span at 8-18 shows a compositional bias: polar residues; sequence MTRQGLRSPQE. 2 coiled-coil regions span residues 82 to 104 and 198 to 226; these read SLQE…LERV and YSCI…LSKI. Positions 509–581 are disordered; the sequence is FEIQADSKDD…ETLRSRKKSD (73 aa). Positions 569-581 are enriched in basic and acidic residues; it reads VSRETLRSRKKSD.

This sequence belongs to the syndetin family. As to quaternary structure, component of the endosome-associated retrograde protein (EARP) complex.

The protein resides in the recycling endosome. It localises to the membrane. Its function is as follows. Acts as a component of the EARP complex that is involved in endocytic recycling. The EARP complex associates with Rab4-positive endosomes and promotes recycling of internalized transferrin receptor (TFRC) to the plasma membrane. This chain is Syndetin, found in Gallus gallus (Chicken).